We begin with the raw amino-acid sequence, 261 residues long: Thiazole synthase (261 aa).

Residue lysine 95 is the Schiff-base intermediate with DXP of the active site. 1-deoxy-D-xylulose 5-phosphate contacts are provided by residues glycine 156, 182 to 183 (AG), and 204 to 205 (NT).

This sequence belongs to the ThiG family. In terms of assembly, homotetramer. Forms heterodimers with either ThiH or ThiS.

It is found in the cytoplasm. The enzyme catalyses [ThiS sulfur-carrier protein]-C-terminal-Gly-aminoethanethioate + 2-iminoacetate + 1-deoxy-D-xylulose 5-phosphate = [ThiS sulfur-carrier protein]-C-terminal Gly-Gly + 2-[(2R,5Z)-2-carboxy-4-methylthiazol-5(2H)-ylidene]ethyl phosphate + 2 H2O + H(+). It participates in cofactor biosynthesis; thiamine diphosphate biosynthesis. Catalyzes the rearrangement of 1-deoxy-D-xylulose 5-phosphate (DXP) to produce the thiazole phosphate moiety of thiamine. Sulfur is provided by the thiocarboxylate moiety of the carrier protein ThiS. In vitro, sulfur can be provided by H(2)S. In Pectobacterium carotovorum subsp. carotovorum (strain PC1), this protein is Thiazole synthase.